Consider the following 511-residue polypeptide: Glycoprotein (511 aa).

The first 16 residues, 1-16 (MKCLLCLAFLFIGVNC), serve as a signal peptide directing secretion. Topologically, residues 17–467 (KFTIVFPHNQ…FSGWKSSIAS (451 aa)) are virion surface. Residues 18 to 35 (FTIVFPHNQKGNWKNVPS) form a trimerization region. Intrachain disulfides connect Cys-40–Cys-300, Cys-75–Cys-108, Cys-84–Cys-130, Cys-169–Cys-174, Cys-193–Cys-240, and Cys-235–Cys-269. The fusion peptide stretch occupies residues 53 to 172 (IGTALQVKMP…QFINGKCSND (120 aa)). N-linked (GlcNAc...) asparagine; by host glycosylation is present at Asn-179. The segment at 259–309 (DLFAAAKFPECPEGSSISAPSQTSVDVSLIQDVERILDYSLCQETWSKIRA) is trimerization. Asn-336 is a glycosylation site (N-linked (GlcNAc...) asparagine; by host). The segment at 383–405 (EIGPNGVLRTSSGYKFPLYMIGH) is trimerization. A helical membrane pass occupies residues 468–488 (FFFIIGLIIGLFLVLRVGIYL). A lipid anchor (S-palmitoyl cysteine; by host) is attached at Cys-489. The Intravirion segment spans residues 489–511 (CIKLKHTRKRKIYADIEMNRLGK). Residues 496-506 (RKRKIYADIEM) carry the basolateral targeting ex vivo motif.

Belongs to the vesiculovirus glycoprotein family. Homotrimer. Interacts with host LDL at target cell surface. In terms of processing, glycosylated by host. Palmitoylated by host.

The protein localises to the virion membrane. It localises to the host membrane. Functionally, attaches the virus to host LDL receptors, inducing clathrin-dependent endocytosis of the virion. In the endosome, the acidic pH induces conformational changes in the glycoprotein trimer, which trigger fusion between virus and endosomal membrane. This is Glycoprotein (G) from Aedes (Bovine).